A 209-amino-acid chain; its full sequence is Ion-translocating oxidoreductase complex subunit G (209 aa).

Residues 1 to 8 are Cytoplasmic-facing; it reads MLTAIRKN. Residues 9-29 form a helical membrane-spanning segment; that stretch reads GLILAVFACVSTGLVALTYAL. Topologically, residues 30 to 209 are periplasmic; the sequence is TAEQIQQQEQ…HNQPNPCEGQ (180 aa). FMN phosphoryl threonine is present on threonine 175.

The protein belongs to the RnfG family. The complex is composed of six subunits: RnfA, RnfB, RnfC, RnfD, RnfE and RnfG. The cofactor is FMN.

It is found in the cell inner membrane. Its function is as follows. Part of a membrane-bound complex that couples electron transfer with translocation of ions across the membrane. This chain is Ion-translocating oxidoreductase complex subunit G, found in Vibrio cholerae serotype O1 (strain ATCC 39541 / Classical Ogawa 395 / O395).